The following is a 533-amino-acid chain: Zinc finger protein 26 (533 aa).

A KRAB domain is found at 14-85 (LSFKDISMEF…NAKISRQSCP (72 aa)). 13 consecutive C2H2-type zinc fingers follow at residues 174–196 (CVCS…LRIH), 202–224 (YECS…QRVH), 230–252 (YSCS…QEIH), 258–280 (YGCS…QRSH), 286–308 (YECS…QRTH), 314–336 (HKCS…IRMH), 342–364 (YQCS…QGVH), 370–392 (YQCG…LRAH), 398–420 (YGCS…RRTH), 426–448 (YECS…QRTH), 454–476 (YECN…QKTH), 482–504 (FKCS…QRVH), and 510–532 (WKCS…RKTH).

This sequence belongs to the krueppel C2H2-type zinc-finger protein family.

It is found in the nucleus. May be involved in transcriptional regulation. This Homo sapiens (Human) protein is Zinc finger protein 26 (ZNF26).